Here is a 2067-residue protein sequence, read N- to C-terminus: Negative regulator of mitosis (2067 aa).

Positions 100-118 (SLAIPQTTSQQSNRPSGSE) are enriched in polar residues. Disordered stretches follow at residues 100–132 (SLAI…STSK), 332–408 (ESIP…DDFA), and 452–480 (GSQS…GFNP). Residues 336 to 347 (SHRKKKRRDTGG) carry the Nuclear localization signal motif. Residues 336 to 355 (SHRKKKRRDTGGTRSKRRSS) are compositionally biased toward basic residues. The segment covering 384 to 396 (WNASVMSHSQYST) has biased composition (polar residues). 4 PC repeats span residues 1434-1465 (AGIM…ADQE), 1482-1520 (AAGF…TKNV), 1532-1562 (GATI…TVRF), and 1625-1659 (GLCF…ISRL). The interval 2020–2042 (FPSESDEEKRDRQETGSMPSSGH) is disordered.

It belongs to the APC1 family.

Its function is as follows. Negative regulator of mitosis in E.nidulans. This protein is part of a regulatory pathway that includes the nimA protein kinase. It is required to prevent premature entry into mitosis. Mutations to this protein both cause cells to enter mitosis and prevent them from leaving mitosis. This Emericella nidulans (strain FGSC A4 / ATCC 38163 / CBS 112.46 / NRRL 194 / M139) (Aspergillus nidulans) protein is Negative regulator of mitosis (bimE).